A 112-amino-acid polypeptide reads, in one-letter code: MNSVFTIIFVLCALQVAASFRQSFGPSMSEESASMQLLRELQHNMMESAHRPMPRARRVPAPGETRACGRKLISLVMAVCGDLCNPQEGKDIATECCGNQCSDDYIRSACCP.

The N-terminal stretch at 1-19 (MNSVFTIIFVLCALQVAAS) is a signal peptide. Residues 20 to 58 (FRQSFGPSMSEESASMQLLRELQHNMMESAHRPMPRARR) constitute a propeptide, removed; by convertase egl-3. Intrachain disulfides connect cysteine 68–cysteine 97, cysteine 80–cysteine 110, cysteine 84–cysteine 111, and cysteine 96–cysteine 101.

It belongs to the insulin family. May be processed by serine endoprotease bli-4. Expressed by ASI and ASJ sensory neurons.

The protein resides in the secreted. Its function is as follows. Probable insulin-like peptide which negatively regulates synapse development at the neuromuscular junctions. Probably acts as a daf-2/InsR agonist ligand to prevent dauer formation under optimal environmental conditions. Acts on AWC sensory neurons to regulate high salt chemotaxis responses. This chain is Probable insulin-like peptide beta-type 5 (ins-6), found in Caenorhabditis elegans.